The sequence spans 663 residues: Sodium/potassium/calcium exchanger 1 (663 aa).

Residues 32–128 (SPSAIPALLT…DLFSVEERRQ (97 aa)) are Extracellular-facing. N-linked (GlcNAc...) asparagine glycosylation is found at Asn59, Asn66, and Asn100. A helical membrane pass occupies residues 129-149 (GWVVLHIFGMMYVFVALAIVC). Residues 150-173 (DEYFVPALGVITEKLQISEDVAGA) lie on the Cytoplasmic side of the membrane. The stretch at 170–210 (VAGATFMAAGGSAPELFTSLIGVFISHSNVGIGTIVGSAVF) is one Alpha-1 repeat. A helical membrane pass occupies residues 174-194 (TFMAAGGSAPELFTSLIGVFI). Residues 195–200 (SHSNVG) are Extracellular-facing. A helical transmembrane segment spans residues 201–221 (IGTIVGSAVFNILFVIGTCAL). The Cytoplasmic portion of the chain corresponds to 222–228 (FSREILH). A helical transmembrane segment spans residues 229–253 (LTWWPLFRDISFYIVDLLMLILFFL). The Extracellular segment spans residues 254–259 (DSVIDW). The helical transmembrane segment at 260–276 (WESLLLLTAYATYVFTM) threads the bilayer. Topologically, residues 277–471 (KHNVSLEQWV…SLEWPETRKK (195 aa)) are cytoplasmic. Disordered stretches follow at residues 308–343 (KSSV…SLHN) and 384–465 (LTGQ…SLEW). The span at 316-325 (DGTKPADGKK) shows a compositional bias: basic and acidic residues. Composition is skewed to polar residues over residues 327-343 (QPTT…SLHN) and 399-412 (ASQN…ASDS). At Ser337 the chain carries Phosphoserine. Residues 413–423 (EPSKDKQKEDT) are compositionally biased toward basic and acidic residues. Residues 434–461 (DNSEDSSSDSEDDSDDDSTDDEENDEPL) show a composition bias toward acidic residues. A helical transmembrane segment spans residues 472-492 (QAIYLFLFPIVFPLWSTIPDV). The Extracellular portion of the chain corresponds to 493–499 (RNPDSKK). The helical transmembrane segment at 500-520 (FFVITFFGSIIWIAAFSYLMV) threads the bilayer. At 521–535 (WWAHQVGETIGISEE) the chain is on the cytoplasmic side. A helical membrane pass occupies residues 536–556 (IMGLTILAAGTSIPDLITSVI). The Alpha-2 repeat unit spans residues 543-574 (AAGTSIPDLITSVIVARKGLGDMAVSSSVGSN). Residues 557-574 (VARKGLGDMAVSSSVGSN) are Extracellular-facing. Residues 575–595 (IFDITVGLPVPWFLYSVFNGF) form a helical membrane-spanning segment. The Cytoplasmic portion of the chain corresponds to 596–604 (SPVAVSSNG). A helical membrane pass occupies residues 605-625 (LFCAIVLLFLMLLFVIISIAL). At 626–632 (CKWKMNK) the chain is on the extracellular side. Residues 633-653 (ILGVTMFALYFVFLIISVMLE) form a helical membrane-spanning segment. Residues 654–663 (DRIISCPVSV) are Cytoplasmic-facing.

It belongs to the Ca(2+):cation antiporter (CaCA) (TC 2.A.19) family. SLC24A subfamily. The uncleaved signal sequence is required for efficient membrane targeting and proper membrane integration and topology. In terms of tissue distribution, retinal rods. Localizes to the inner segment of rod photoreceptors.

It localises to the cell membrane. It carries out the reaction Ca(2+)(out) + K(+)(out) + 4 Na(+)(in) = Ca(2+)(in) + K(+)(in) + 4 Na(+)(out). Its function is as follows. Calcium, potassium:sodium antiporter that transports 1 Ca(2+) and 1 K(+) in exchange for 4 Na(+). Critical component of the visual transduction cascade, controlling the calcium concentration of outer segments during light and darkness. Light causes a rapid lowering of cytosolic free calcium in the outer segment of both retinal rod and cone photoreceptors and the light-induced lowering of calcium is caused by extrusion via this protein which plays a key role in the process of light adaptation. This chain is Sodium/potassium/calcium exchanger 1 (SLC24A1), found in Gallus gallus (Chicken).